The following is a 156-amino-acid chain: Cyanate hydratase (156 aa).

Active-site residues include Arg96, Glu99, and Ser122.

This sequence belongs to the cyanase family.

It catalyses the reaction cyanate + hydrogencarbonate + 3 H(+) = NH4(+) + 2 CO2. Catalyzes the reaction of cyanate with bicarbonate to produce ammonia and carbon dioxide. The polypeptide is Cyanate hydratase (Serratia proteamaculans (strain 568)).